A 354-amino-acid polypeptide reads, in one-letter code: DNA polymerase IV (354 aa).

The UmuC domain occupies 3 to 188 (VIFVDFDYFF…LDIDEIPGIG (186 aa)). The Mg(2+) site is built by D7 and D105. Residue E106 is part of the active site.

Belongs to the DNA polymerase type-Y family. As to quaternary structure, monomer. The cofactor is Mg(2+).

Its subcellular location is the cytoplasm. The enzyme catalyses DNA(n) + a 2'-deoxyribonucleoside 5'-triphosphate = DNA(n+1) + diphosphate. Its function is as follows. Poorly processive, error-prone DNA polymerase involved in untargeted mutagenesis. Copies undamaged DNA at stalled replication forks, which arise in vivo from mismatched or misaligned primer ends. These misaligned primers can be extended by PolIV. Exhibits no 3'-5' exonuclease (proofreading) activity. May be involved in translesional synthesis. This chain is DNA polymerase IV, found in Sulfolobus acidocaldarius (strain ATCC 33909 / DSM 639 / JCM 8929 / NBRC 15157 / NCIMB 11770).